The primary structure comprises 568 residues: COMPASS component cclA (568 aa).

The disordered stretch occupies residues Met1 to Pro113. 2 stretches are compositionally biased toward basic and acidic residues: residues Lys68–Lys77 and Pro89–Gln98. Residues Ala160 to Tyr353 enclose the B30.2/SPRY domain.

This sequence belongs to the cclA family. As to quaternary structure, component of the COMPASS complex.

It localises to the nucleus. It is found in the chromosome. The protein resides in the telomere. In terms of biological role, component of the COMPASS (Set1C) complex that specifically mono-, di- and trimethylates histone H3 to form H3K4me1/2/3, which subsequently plays a role in telomere length maintenance and transcription elongation regulation. Controls the production of several secondary metabolites, including colletochlorins, higginsianins and sclerosporide. Plays a key role in mycelial growth, sporulation, spore germination and virulence. The chain is COMPASS component cclA from Colletotrichum higginsianum (strain IMI 349063) (Crucifer anthracnose fungus).